Reading from the N-terminus, the 355-residue chain is Protein-glutamate methylesterase/protein-glutamine glutaminase (355 aa).

The region spanning 7 to 123 (AAVVVDDSQF…SVGIKQQQDE (117 aa)) is the Response regulatory domain. A 4-aspartylphosphate modification is found at aspartate 57. The interval 139-159 (TEAAAERTTSTATSTTTSRSA) is disordered. Residues 161 to 355 (EYVDKPTLVI…DGVLDTIMRE (195 aa)) enclose the CheB-type methylesterase domain. Catalysis depends on residues serine 173, histidine 200, and aspartate 297.

It belongs to the CheB family. Phosphorylated by CheA. Phosphorylation of the N-terminal regulatory domain activates the methylesterase activity.

The protein localises to the cytoplasm. It carries out the reaction [protein]-L-glutamate 5-O-methyl ester + H2O = L-glutamyl-[protein] + methanol + H(+). The enzyme catalyses L-glutaminyl-[protein] + H2O = L-glutamyl-[protein] + NH4(+). Its function is as follows. Involved in chemotaxis. Part of a chemotaxis signal transduction system that modulates chemotaxis in response to various stimuli. Catalyzes the demethylation of specific methylglutamate residues introduced into the chemoreceptors (methyl-accepting chemotaxis proteins or MCP) by CheR. Also mediates the irreversible deamidation of specific glutamine residues to glutamic acid. The chain is Protein-glutamate methylesterase/protein-glutamine glutaminase from Natronomonas pharaonis (strain ATCC 35678 / DSM 2160 / CIP 103997 / JCM 8858 / NBRC 14720 / NCIMB 2260 / Gabara) (Halobacterium pharaonis).